We begin with the raw amino-acid sequence, 215 residues long: N-(5'-phosphoribosyl)anthranilate isomerase (215 aa).

It belongs to the TrpF family.

The enzyme catalyses N-(5-phospho-beta-D-ribosyl)anthranilate = 1-(2-carboxyphenylamino)-1-deoxy-D-ribulose 5-phosphate. The protein operates within amino-acid biosynthesis; L-tryptophan biosynthesis; L-tryptophan from chorismate: step 3/5. The protein is N-(5'-phosphoribosyl)anthranilate isomerase of Rhizobium meliloti (strain 1021) (Ensifer meliloti).